The following is a 171-amino-acid chain: MTDMQTPFVAKVVVHMGVGEAGERLVNAENIMADLTKGAKPIRSYARNTLPAFGIRKGQPIGCKATLRGKKAMDFLEMALKTYAVENVLHTRQFDATGNFGFGIEEHTDFPGQAYDPKIGIYGMDIIAVIEKKGTRTARRKIQQKKINSKLHVAREESMKFVTETFGIEVE.

It belongs to the universal ribosomal protein uL5 family. Part of the 50S ribosomal subunit; contacts the 5S rRNA and probably tRNA. Forms a bridge to the 30S subunit in the 70S ribosome.

Functionally, this is one of the proteins that bind and probably mediate the attachment of the 5S RNA into the large ribosomal subunit, where it forms part of the central protuberance. In the 70S ribosome it contacts protein S13 of the 30S subunit (bridge B1b), connecting the 2 subunits; this bridge is implicated in subunit movement. May contact the P site tRNA; the 5S rRNA and some of its associated proteins might help stabilize positioning of ribosome-bound tRNAs. This chain is Large ribosomal subunit protein uL5, found in Methanocorpusculum labreanum (strain ATCC 43576 / DSM 4855 / Z).